The chain runs to 240 residues: Regulatory protein SdiA (240 aa).

One can recognise an HTH luxR-type domain in the interval 173–238 (VMTPEMNFSK…QVACYAAATG (66 aa)). The H-T-H motif DNA-binding region spans 197-216 (SAEIAMILSISENTVNFHQK).

In terms of biological role, activates cell division by specifically increasing transcription from one of the two promoters that lie immediately upstream of the ftsQAZ gene cluster. Activates ydiV expression in response to extracellular autoinducer AI-1 (Vibrio fischeri autoinducer oxoC6). This is Regulatory protein SdiA (sdiA) from Escherichia coli (strain K12).